A 394-amino-acid chain; its full sequence is Phosphoglycerate kinase (394 aa).

Substrate-binding positions include 21-23 (DFN), Arg-36, 59-62 (HLGR), Arg-118, and Arg-151. Ser-183 bears the Phosphoserine mark. ATP is bound by residues Lys-201 and Gly-292. A Phosphothreonine modification is found at Thr-299. Residues Glu-323 and 350–353 (GGDS) contribute to the ATP site.

This sequence belongs to the phosphoglycerate kinase family. As to quaternary structure, monomer.

The protein localises to the cytoplasm. It carries out the reaction (2R)-3-phosphoglycerate + ATP = (2R)-3-phospho-glyceroyl phosphate + ADP. The protein operates within carbohydrate degradation; glycolysis; pyruvate from D-glyceraldehyde 3-phosphate: step 2/5. This Bacillus thuringiensis subsp. konkukian (strain 97-27) protein is Phosphoglycerate kinase.